Consider the following 376-residue polypeptide: Putative dihydroorotase (376 aa).

Residues H35 and H37 each contribute to the Zn(2+) site. Substrate is bound by residues 37–39 (HVR) and N66. 3 residues coordinate Zn(2+): D114, H138, and H187. N230 contributes to the substrate binding site. D257 lines the Zn(2+) pocket. Residue D257 is part of the active site. Substrate-binding positions include H261 and 273-274 (YG).

Belongs to the metallo-dependent hydrolases superfamily. DHOase family. Class I DHOase subfamily. It depends on Zn(2+) as a cofactor.

The enzyme catalyses (S)-dihydroorotate + H2O = N-carbamoyl-L-aspartate + H(+). The protein operates within pyrimidine metabolism; UMP biosynthesis via de novo pathway; (S)-dihydroorotate from bicarbonate: step 3/3. Functionally, catalyzes the reversible cyclization of carbamoyl aspartate to dihydroorotate. The polypeptide is Putative dihydroorotase (pyrC) (Thermotoga maritima (strain ATCC 43589 / DSM 3109 / JCM 10099 / NBRC 100826 / MSB8)).